The primary structure comprises 117 residues: Photosystem II reaction center Psb28 protein (117 aa).

This sequence belongs to the Psb28 family. As to quaternary structure, part of the photosystem II complex.

Its subcellular location is the cellular thylakoid membrane. This Prochlorococcus marinus (strain MIT 9301) protein is Photosystem II reaction center Psb28 protein.